The sequence spans 231 residues: Probable methylthioribulose-1-phosphate dehydratase (231 aa).

Cys-82 is a binding site for substrate. Positions 100 and 102 each coordinate Zn(2+). The Proton donor/acceptor role is filled by Glu-123. Residue His-181 coordinates Zn(2+).

Belongs to the aldolase class II family. MtnB subfamily. Zn(2+) serves as cofactor.

The protein resides in the cytoplasm. It carries out the reaction 5-(methylsulfanyl)-D-ribulose 1-phosphate = 5-methylsulfanyl-2,3-dioxopentyl phosphate + H2O. It participates in amino-acid biosynthesis; L-methionine biosynthesis via salvage pathway; L-methionine from S-methyl-5-thio-alpha-D-ribose 1-phosphate: step 2/6. In terms of biological role, catalyzes the dehydration of methylthioribulose-1-phosphate (MTRu-1-P) into 2,3-diketo-5-methylthiopentyl-1-phosphate (DK-MTP-1-P). The sequence is that of Probable methylthioribulose-1-phosphate dehydratase from Dictyostelium discoideum (Social amoeba).